Here is a 543-residue protein sequence, read N- to C-terminus: CTP synthase (543 aa).

Residues 1–267 (MKQTKYIFVT…LSPIAEILDL (267 aa)) form an amidoligase domain region. CTP is bound at residue serine 15. Residue serine 15 coordinates UTP. Residues 16 to 21 (SLGKGI) and aspartate 73 contribute to the ATP site. Positions 73 and 141 each coordinate Mg(2+). CTP-binding positions include 148–150 (DIE), 188–193 (KTKPTQ), and lysine 224. Residues 188-193 (KTKPTQ) and lysine 224 each bind UTP. Residues 292 to 543 (KIAFVGKYVD…IKAAINYEDN (252 aa)) enclose the Glutamine amidotransferase type-1 domain. Glycine 354 lines the L-glutamine pocket. Cysteine 381 serves as the catalytic Nucleophile; for glutamine hydrolysis. L-glutamine is bound by residues 382–385 (LGMQ), glutamate 405, and arginine 473. Catalysis depends on residues histidine 516 and glutamate 518.

This sequence belongs to the CTP synthase family. In terms of assembly, homotetramer.

It catalyses the reaction UTP + L-glutamine + ATP + H2O = CTP + L-glutamate + ADP + phosphate + 2 H(+). It carries out the reaction L-glutamine + H2O = L-glutamate + NH4(+). The catalysed reaction is UTP + NH4(+) + ATP = CTP + ADP + phosphate + 2 H(+). The protein operates within pyrimidine metabolism; CTP biosynthesis via de novo pathway; CTP from UDP: step 2/2. Its activity is regulated as follows. Allosterically activated by GTP, when glutamine is the substrate; GTP has no effect on the reaction when ammonia is the substrate. The allosteric effector GTP functions by stabilizing the protein conformation that binds the tetrahedral intermediate(s) formed during glutamine hydrolysis. Inhibited by the product CTP, via allosteric rather than competitive inhibition. In terms of biological role, catalyzes the ATP-dependent amination of UTP to CTP with either L-glutamine or ammonia as the source of nitrogen. Regulates intracellular CTP levels through interactions with the four ribonucleotide triphosphates. This Campylobacter jejuni subsp. jejuni serotype O:23/36 (strain 81-176) protein is CTP synthase.